We begin with the raw amino-acid sequence, 108 residues long: Large ribosomal subunit protein P2A (108 aa).

Positions 62-108 are disordered; sequence LSSVPSGAPAAAAGGASAAAGGEATEEAAEEEAAEESDDDMSFGLFD. Residues 68 to 84 are compositionally biased toward low complexity; the sequence is GAPAAAAGGASAAAGGE. Residues 85 to 102 are compositionally biased toward acidic residues; the sequence is ATEEAAEEEAAEESDDDM. S98 is modified (phosphoserine).

It belongs to the eukaryotic ribosomal protein P1/P2 family.

Its function is as follows. Plays an important role in the elongation step of protein synthesis. This is Large ribosomal subunit protein P2A (RPP2A) from Candida albicans (Yeast).